The sequence spans 215 residues: Pyridoxine/pyridoxamine 5'-phosphate oxidase (215 aa).

Substrate is bound by residues 9–12 and Lys69; that span reads RRDY. Residues 64 to 69, 79 to 80, Lys86, and Gln108 contribute to the FMN site; these read RVLLLK and FT. Substrate contacts are provided by Tyr126, Arg130, and Ser134. FMN-binding positions include 143-144 and Trp188; that span reads QS. Substrate is bound at residue 194–196; sequence RLH. Arg198 is a binding site for FMN.

This sequence belongs to the pyridoxamine 5'-phosphate oxidase family. In terms of assembly, homodimer. The cofactor is FMN.

It carries out the reaction pyridoxamine 5'-phosphate + O2 + H2O = pyridoxal 5'-phosphate + H2O2 + NH4(+). It catalyses the reaction pyridoxine 5'-phosphate + O2 = pyridoxal 5'-phosphate + H2O2. It functions in the pathway cofactor metabolism; pyridoxal 5'-phosphate salvage; pyridoxal 5'-phosphate from pyridoxamine 5'-phosphate: step 1/1. Its pathway is cofactor metabolism; pyridoxal 5'-phosphate salvage; pyridoxal 5'-phosphate from pyridoxine 5'-phosphate: step 1/1. Catalyzes the oxidation of either pyridoxine 5'-phosphate (PNP) or pyridoxamine 5'-phosphate (PMP) into pyridoxal 5'-phosphate (PLP). This is Pyridoxine/pyridoxamine 5'-phosphate oxidase from Pseudomonas entomophila (strain L48).